A 107-amino-acid polypeptide reads, in one-letter code: Putative antitoxin VapB5 (107 aa).

2 helical membrane-spanning segments follow: residues 3 to 23 (GPVIIPLISTLGLSFLAILLA) and 65 to 85 (LIILTPALTWSLTALSMAYLY).

It localises to the cell membrane. Possibly the antitoxin component of a type II toxin-antitoxin (TA) system. Its cognate toxin is VapC5 (Potential). This is Putative antitoxin VapB5 (vapB5) from Methanocaldococcus jannaschii (strain ATCC 43067 / DSM 2661 / JAL-1 / JCM 10045 / NBRC 100440) (Methanococcus jannaschii).